The chain runs to 325 residues: Lactonase drp35 (325 aa).

Residues Glu-46, Thr-108, Gly-110, Asp-128, Thr-131, Tyr-133, Asp-136, Asn-183, Asp-234, and Ser-235 each coordinate Ca(2+). Asp-234 functions as the Proton donor in the catalytic mechanism.

The protein belongs to the SMP-30/CGR1 family. Ca(2+) serves as cofactor.

It localises to the cytoplasm. In terms of biological role, exhibits lactonase activity. Acts in cells with perturbed membrane integrity and is possibly related to the membrane homeostasis. The polypeptide is Lactonase drp35 (drp35) (Staphylococcus epidermidis (strain ATCC 12228 / FDA PCI 1200)).